A 1637-amino-acid chain; its full sequence is Surface protein (1637 aa).

Residues 1 to 48 (MNKNSKKKLDFLPNKLNKYSIRRFTVGTASILVGATLIFGVANDQAEA) form the signal peptide. 3 disordered regions span residues 49–305 (AENN…RTQV), 689–719 (VQKGEDGEKTTTTPTKVDPDTGDVVERGEPT), and 739–1611 (PQGH…NGTL). Basic and acidic residues predominate over residues 56–65 (KQDDSSDASK). Residues 69–83 (NVQTIEQSSANSNES) are compositionally biased toward polar residues. Composition is skewed to basic and acidic residues over residues 90–106 (DVTKDTTEQASTEEKAN), 127–180 (EAPK…KATT), and 188–264 (ETSK…KVET). Positions 289-298 (AKSNSNAQPS) are enriched in polar residues. 5 G5 domains span residues 654–737 (QADL…TPEE), 783–865 (HGPK…GGEE), 911–993 (HGPK…GGEE), 1039–1121 (HGPK…GGEE), and 1167–1250 (HGPK…APEI). Over residues 779-817 (DVTKHGPKAGEPEVTKEEIPFEKKREFNPDLKPGEEKVT) the composition is skewed to basic and acidic residues. The span at 818–832 (QEGQTGEKTTTTPTT) shows a compositional bias: low complexity. The segment covering 907 to 945 (DVTKHGPKAGEPEVTKEEIPFEKKREFNPDLKPGEEKVT) has biased composition (basic and acidic residues). Residues 946–960 (QEGQTGEKTTTTPTT) are compositionally biased toward low complexity. A compositionally biased stretch (basic and acidic residues) spans 1035 to 1073 (DVTKHGPKAGEPEVTKEEIPFEKKREFNPDLKPGEEKVT). Residues 1074-1088 (QEGQTGEKTTTTPTT) are compositionally biased toward low complexity. Positions 1163 to 1189 (DVTKHGPKAGEPEVTKEEIPYETKRVL) are enriched in basic and acidic residues. 2 stretches are compositionally biased toward acidic residues: residues 1282–1291 (TGEIIEEPQD) and 1302–1580 (SDAD…DSDS). Repeat copies occupy residues 1301–1302 (DS), 1303–1304 (DA), 1305–1306 (DS), 1307–1308 (DS), 1309–1310 (DA), 1311–1312 (DS), 1313–1314 (DS), 1315–1316 (DA), 1317–1318 (DS), 1319–1320 (DS), 1321–1322 (DA), 1323–1324 (DS), 1325–1326 (DS), 1327–1328 (DA), 1329–1330 (DS), 1331–1332 (DS), 1333–1334 (DS), 1335–1336 (DS), 1337–1338 (DS), 1339–1340 (DS), 1341–1342 (DS), 1343–1344 (DS), 1345–1346 (DA), 1347–1348 (DS), 1349–1350 (DS), 1351–1352 (DS), 1353–1354 (DS), 1355–1356 (DS), 1357–1358 (DA), 1359–1360 (DS), 1361–1362 (DS), 1363–1364 (DA), 1365–1366 (DS), 1367–1368 (DS), 1369–1370 (DA), 1371–1372 (DS), 1373–1374 (DS), 1375–1376 (DS), 1377–1378 (DA), 1379–1380 (DS), 1381–1382 (DS), 1383–1384 (DS), 1385–1386 (DA), 1387–1388 (DS), 1389–1390 (DS), 1391–1392 (DS), 1393–1394 (DS), 1395–1396 (DS), 1397–1398 (DA), 1399–1400 (DS), 1401–1402 (DS), 1403–1404 (DS), 1405–1406 (DS), 1407–1408 (DS), 1409–1410 (DA), 1411–1412 (DS), 1413–1414 (DS), 1415–1416 (DA), 1417–1418 (DS), 1419–1420 (DS), 1421–1422 (DS), 1423–1424 (DS), 1425–1426 (DS), 1427–1428 (DA), 1429–1430 (DS), 1431–1432 (DS), 1433–1434 (DS), 1435–1436 (DS), 1437–1438 (DS), 1439–1440 (DA), 1441–1442 (DS), 1443–1444 (DS), 1445–1446 (DA), 1447–1448 (DS), 1449–1450 (DS), 1451–1452 (DA), 1453–1454 (DS), 1455–1456 (DS), 1457–1458 (DA), 1459–1460 (DS), 1461–1462 (DS), 1463–1464 (DS), 1465–1466 (DS), 1467–1468 (DS), 1469–1470 (DA), 1471–1472 (DS), 1473–1474 (DS), 1475–1476 (DA), 1477–1478 (DS), 1479–1480 (DS), 1481–1482 (DA), 1483–1484 (DS), 1485–1486 (DS), 1487–1488 (DA), 1489–1490 (DS), 1491–1492 (DS), 1493–1494 (DS), 1495–1496 (DS), 1497–1498 (DS), 1499–1500 (DA), 1501–1502 (DS), 1503–1504 (DS), 1505–1506 (DS), 1507–1508 (DS), 1509–1510 (DS), 1511–1512 (DS), 1513–1514 (DA), 1515–1516 (DS), 1517–1518 (DS), 1519–1520 (DA), 1521–1522 (DS), 1523–1524 (DS), 1525–1526 (DS), 1527–1528 (DA), 1529–1530 (DS), 1531–1532 (DS), 1533–1534 (DA), 1535–1536 (DS), 1537–1538 (DS), 1539–1540 (DA), 1541–1542 (DG), 1543–1544 (DS), 1545–1546 (DA), 1547–1548 (DS), 1549–1550 (DS), 1551–1552 (DA), 1553–1554 (DS), 1555–1556 (DS), 1557–1558 (DS), 1559–1560 (DS), 1561–1562 (DS), 1563–1564 (DS), 1565–1566 (DS), 1567–1568 (DS), 1569–1570 (DA), 1571–1572 (DS), 1573–1574 (DS), 1575–1576 (DS), 1577–1578 (DS), 1579–1580 (DS), and 1581–1582 (DA). Residues 1301 to 1582 (DSDADSDSDA…DSDSDSDSDA (282 aa)) are 141 X 2 AA tandem repeats of D-[SAG]. Positions 1581–1599 (DADRDHNDKTDKPNNKELP) are enriched in basic and acidic residues. The LPXTG sorting signal signature appears at 1598 to 1602 (LPDTG). The residue at position 1601 (Thr1601) is a Pentaglycyl murein peptidoglycan amidated threonine. Residues 1602–1637 (GNDAQNNGTLFGSLFAALGGLFLVGRRRKNKNNEEK) constitute a propeptide, removed by sortase.

The protein resides in the secreted. It is found in the cell wall. Could have a role in preventing adhesion at some stages during an infection. This is Surface protein (pls) from Staphylococcus aureus.